A 500-amino-acid chain; its full sequence is Probable malate:quinone oxidoreductase (500 aa).

It belongs to the MQO family. The cofactor is FAD.

The enzyme catalyses (S)-malate + a quinone = a quinol + oxaloacetate. The protein operates within carbohydrate metabolism; tricarboxylic acid cycle; oxaloacetate from (S)-malate (quinone route): step 1/1. The sequence is that of Probable malate:quinone oxidoreductase from Gluconobacter oxydans (strain 621H) (Gluconobacter suboxydans).